Reading from the N-terminus, the 123-residue chain is Small ribosomal subunit protein eS8 (123 aa).

Residues 1-38 (MKDQGRSPRKRTGGRRRPNHKKKKHELGKDTVETQVGE) form a disordered region. Over residues 7 to 26 (SPRKRTGGRRRPNHKKKKHE) the composition is skewed to basic residues.

As to quaternary structure, part of the 30S ribosomal subunit.

This Haloarcula marismortui (strain ATCC 43049 / DSM 3752 / JCM 8966 / VKM B-1809) (Halobacterium marismortui) protein is Small ribosomal subunit protein eS8 (rps8e).